Here is a 434-residue protein sequence, read N- to C-terminus: Putative nuclease OPG089 (434 aa).

The Mg(2+) site is built by D33, D74, E168, D170, D196, and D198.

It belongs to the XPG/RAD2 endonuclease family. FEN1 subfamily. The cofactor is Mg(2+).

The protein localises to the virion. Putative nuclease that seems to be required for double-strand break repair, homologous recombination, and production of full-length viral genomic DNA. The sequence is that of Putative nuclease OPG089 (OPG089) from Homo sapiens (Human).